Reading from the N-terminus, the 430-residue chain is Enolase (430 aa).

(2R)-2-phosphoglycerate is bound at residue glutamine 163. The active-site Proton donor is glutamate 205. Positions 242, 285, and 312 each coordinate Mg(2+). 4 residues coordinate (2R)-2-phosphoglycerate: lysine 337, arginine 366, serine 367, and lysine 388. Lysine 337 serves as the catalytic Proton acceptor.

The protein belongs to the enolase family. Mg(2+) serves as cofactor.

It localises to the cytoplasm. It is found in the secreted. The protein resides in the cell surface. It catalyses the reaction (2R)-2-phosphoglycerate = phosphoenolpyruvate + H2O. It participates in carbohydrate degradation; glycolysis; pyruvate from D-glyceraldehyde 3-phosphate: step 4/5. Catalyzes the reversible conversion of 2-phosphoglycerate (2-PG) into phosphoenolpyruvate (PEP). It is essential for the degradation of carbohydrates via glycolysis. The sequence is that of Enolase from Rhodopseudomonas palustris (strain BisB18).